A 477-amino-acid chain; its full sequence is Pentatricopeptide repeat-containing protein At4g14170 (477 aa).

PPR repeat units follow at residues 65 to 96 (NVVL…MPYR), 97 to 131 (NIFS…SCVR), 133 to 167 (DDFT…GFSS), 168 to 198 (SLFV…MPVR), 199 to 233 (DSVL…GFAL), 234 to 264 (DSVV…CIRR), 269 to 299 (GLNL…MSRR), 300 to 334 (DVIS…GIEP), 335 to 369 (NAVT…NIVP), and 370 to 400 (ELKH…MPVK). The interval 405–477 (VMGAVLSGCK…ISKVPGCSSI (73 aa)) is type E motif; degenerate.

This sequence belongs to the PPR family. PCMP-E subfamily.

The sequence is that of Pentatricopeptide repeat-containing protein At4g14170 (PCMP-E17) from Arabidopsis thaliana (Mouse-ear cress).